The primary structure comprises 499 residues: GTPase Der (499 aa).

2 EngA-type G domains span residues 3–166 and 213–386; these read PVVA…LETL and IKFA…QSAT. GTP is bound by residues 9–16, 56–60, 118–121, 219–226, 266–270, and 331–334; these read GRPNVGKS, DTGGI, NKTD, DTAGV, and NKWD. The region spanning 387 to 471 is the KH-like domain; that stretch reads RRTSTAMLTR…PVRVEFQESA (85 aa).

This sequence belongs to the TRAFAC class TrmE-Era-EngA-EngB-Septin-like GTPase superfamily. EngA (Der) GTPase family. Associates with the 50S ribosomal subunit.

In terms of biological role, GTPase that plays an essential role in the late steps of ribosome biogenesis. This chain is GTPase Der, found in Aeromonas hydrophila subsp. hydrophila (strain ATCC 7966 / DSM 30187 / BCRC 13018 / CCUG 14551 / JCM 1027 / KCTC 2358 / NCIMB 9240 / NCTC 8049).